The primary structure comprises 40 residues: Beta/delta-ctenitoxin-Pr1a (40 aa).

4 cysteine pairs are disulfide-bonded: C1/C15, C8/C21, C14/C31, and C23/C29.

The protein belongs to the neurotoxin 03 (Tx2) family. 05 subfamily. In terms of tissue distribution, expressed by the venom gland.

It is found in the secreted. Functionally, potent insecticidal toxin that binds to two distinct sites in insect sodium channels, with close affinity (Kd1=34.7 pM and Kd2=35.1 pM). Its association is rather fast (1.4 and 8.5 minutes, respectively for sites 1 and 2) and its dissociation is a slower process (5.4 and 32.8 minutes, respectively). On rat brain synaptosomes the toxin partially competes (~30%) with the beta-toxin CssIV, but does not compete with the alpha-toxin AaII, nor with the beta-toxin Ts VII. On cockroach nerve cord synaptosomes, the toxin does not compete with the anti-insect toxin LqqIT1, but it competes with the 'alpha-like' toxin BomIV (IC(50)=80 pM). In cockroach neurons, the toxin inhibits the inactivation of sodium channels and it shifts the sodium channel activation to hyperpolarizing potentials. Hence, it behaves like an 'alpha-like' toxin and binds preferentially to site 3 on the insect Nav channel, located on the domain IV. The toxin may also inhibit the N-methyl-D-aspartate (NMDA)-subtype of ionotropic glutamate receptor (GRIN). In vivo, the toxin causes excitatory effects on insects. The polypeptide is Beta/delta-ctenitoxin-Pr1a (Phoneutria reidyi (Brazilian Amazonian armed spider)).